Here is a 132-residue protein sequence, read N- to C-terminus: Agouti-signaling protein (132 aa).

The signal sequence occupies residues 1-22 (MDVTRLVLATLLVFLCFFAAYS). Residue Asn39 is glycosylated (N-linked (GlcNAc...) asparagine). Positions 60–93 (KKISRKEAEKRRSSKKEASKQKVARPRTPLSVPC) are disordered. The span at 64–79 (RKEAEKRRSSKKEASK) shows a compositional bias: basic and acidic residues. Disulfide bonds link Cys93–Cys108, Cys100–Cys114, Cys107–Cys125, Cys111–Cys132, and Cys116–Cys123. One can recognise an Agouti domain in the interval 93–132 (CVSTRGSCKPPAPACCHPCASCQCRFFRSACSCRVLNVNC).

Its subcellular location is the secreted. Functionally, involved in the regulation of melanogenesis. The binding of ASP to MC1R precludes alpha-MSH initiated signaling and thus blocks production of cAMP, leading to a down-regulation of eumelanogenesis (brown/black pigment) and thus increasing synthesis of pheomelanin (yellow/red pigment). This is Agouti-signaling protein (ASIP) from Cebuella pygmaea (Pygmy marmoset).